We begin with the raw amino-acid sequence, 310 residues long: Methionyl-tRNA formyltransferase (310 aa).

110-113 is a binding site for (6S)-5,6,7,8-tetrahydrofolate; that stretch reads SLLP.

This sequence belongs to the Fmt family.

It catalyses the reaction L-methionyl-tRNA(fMet) + (6R)-10-formyltetrahydrofolate = N-formyl-L-methionyl-tRNA(fMet) + (6S)-5,6,7,8-tetrahydrofolate + H(+). In terms of biological role, attaches a formyl group to the free amino group of methionyl-tRNA(fMet). The formyl group appears to play a dual role in the initiator identity of N-formylmethionyl-tRNA by promoting its recognition by IF2 and preventing the misappropriation of this tRNA by the elongation apparatus. This Streptomyces avermitilis (strain ATCC 31267 / DSM 46492 / JCM 5070 / NBRC 14893 / NCIMB 12804 / NRRL 8165 / MA-4680) protein is Methionyl-tRNA formyltransferase.